A 330-amino-acid chain; its full sequence is Calponin-3 (330 aa).

N6-acetyllysine is present on Lys-23. The Calponin-homology (CH) domain maps to 26 to 130; that stretch reads QQAEEDLRNW…TLVALAGLAK (105 aa). Lys-158 is modified (N6-methyllysine). Calponin-like repeat units lie at residues 164–189, 204–229, and 243–268; these read IGLQ…RHLY, ISLQ…RDIY, and ISLQ…RQVY. Positions 279–330 are disordered; that stretch reads PVIHNGSQGTGTNGSEISDSDYQAEYPDEYHGEYPDEYPREYQYGDDQGIDY. Basic and acidic residues predominate over residues 306-318; sequence DEYHGEYPDEYPR.

The protein belongs to the calponin family.

Its function is as follows. Thin filament-associated protein that is implicated in the regulation and modulation of smooth muscle contraction. It is capable of binding to actin, calmodulin and tropomyosin. The interaction of calponin with actin inhibits the actomyosin Mg-ATPase activity. In Rattus norvegicus (Rat), this protein is Calponin-3 (Cnn3).